Here is a 5488-residue protein sequence, read N- to C-terminus: Polyketide synthase PksN (5488 aa).

A condensation region spans residues Arg3–Ile301. A WD 1 repeat occupies Gln165–Val205. The tract at residues Thr493–Val903 is adenylation. One copy of the WD 2 repeat lies at Arg965 to Gly1006. Positions Leu983–Lys1058 constitute a Carrier 1 domain. An O-(pantetheine 4'-phosphoryl)serine modification is found at Ser1018. Residues Asp1089–Gln1515 form the Ketosynthase family 3 (KS3) 1 domain. Active-site for beta-ketoacyl synthase 1 activity residues include Cys1261, His1397, and His1437. Positions His1700–Arg1826 are N-terminal hotdog fold 1. The PKS/mFAS DH 1 domain occupies His1700–Thr1992. Residue His1729 is the Proton acceptor; for dehydratase activity 1 of the active site. The interval Asp1840–Thr1992 is C-terminal hotdog fold 1. The Proton donor; for dehydratase activity 1 role is filled by Asp1900. A WD 3 repeat occupies Lys2165–Asn2204. The Carrier 2 domain maps to Ser2448–Tyr2525. The residue at position 2485 (Ser2485) is an O-(pantetheine 4'-phosphoryl)serine. A Ketosynthase family 3 (KS3) 2 domain is found at Pro2576–Glu3012. Catalysis depends on for beta-ketoacyl synthase 2 activity residues Cys2747, His2882, and His2928. A coiled-coil region spans residues Lys3038–Val3109. The tract at residues His3207 to Asn3332 is N-terminal hotdog fold 2. Residues His3207–Ser3492 enclose the PKS/mFAS DH 2 domain. Residue His3236 is the Proton acceptor; for dehydratase activity 2 of the active site. The segment at Gln3346 to Ser3492 is C-terminal hotdog fold 2. The Proton donor; for dehydratase activity 2 role is filled by Asp3408. A coiled-coil region spans residues Asp3626–Gly3655. One copy of the WD 4 repeat lies at Gln3666–Gln3705. Positions Asp3952–Tyr4026 constitute a Carrier 3 domain. Position 3986 is an O-(pantetheine 4'-phosphoryl)serine (Ser3986). In terms of domain architecture, Ketosynthase family 3 (KS3) 3 spans Pro4076 to Glu4511. Residues Cys4245, His4380, and His4427 each act as for beta-ketoacyl synthase 3 activity in the active site. The segment at His4706–Asp4830 is N-terminal hotdog fold 3. Residues His4706–Pro4988 form the PKS/mFAS DH 3 domain. The active-site Proton acceptor; for dehydratase activity 3 is His4735. The C-terminal hotdog fold 3 stretch occupies residues Ser4844 to Pro4988. Asp4906 acts as the Proton donor; for dehydratase activity 3 in catalysis. The stretch at His5206–Ala5244 is one WD 5 repeat. Residues Ile5275 to Ile5303 adopt a coiled-coil conformation.

The protein belongs to the ATP-dependent AMP-binding enzyme family. Requires pantetheine 4'-phosphate as cofactor.

It is found in the cytoplasm. It functions in the pathway antibiotic biosynthesis; bacillaene biosynthesis. Involved in some intermediate steps for the synthesis of the antibiotic polyketide bacillaene which is involved in secondary metabolism. The sequence is that of Polyketide synthase PksN (pksN) from Bacillus subtilis (strain 168).